A 485-amino-acid polypeptide reads, in one-letter code: Serine/threonine-protein kinase dst4 (485 aa).

Residues 21–278 (FRVLEVIGQG…AVDLLNHPFI (258 aa)) form the Protein kinase domain. ATP contacts are provided by residues 27 to 35 (IGQGSFGVV) and lysine 50. Aspartate 142 functions as the Proton acceptor in the catalytic mechanism. 3 disordered regions span residues 304-343 (RRKKAEEEEAEEAEEGDDYDDVNGGGDERQHGSSVSSAGL), 360-424 (VMRE…GSVV), and 436-485 (SMKL…NQDD). Residues 310 to 324 (EEEAEEAEEGDDYDD) show a composition bias toward acidic residues. Residues 370 to 393 (SNNGGTFIYNNNNNNSSKTSSSGT) show a composition bias toward low complexity. Acidic residues-rich tracts occupy residues 406–417 (DDDDDDDIEEGG) and 450–468 (SSDEEDEEDEDDEDDEEGG). Residues 474-485 (VVYTKSPVNQDD) show a composition bias toward polar residues.

Belongs to the protein kinase superfamily. STE Ser/Thr protein kinase family. STE20 subfamily. Mg(2+) is required as a cofactor.

It catalyses the reaction L-seryl-[protein] + ATP = O-phospho-L-seryl-[protein] + ADP + H(+). It carries out the reaction L-threonyl-[protein] + ATP = O-phospho-L-threonyl-[protein] + ADP + H(+). This chain is Serine/threonine-protein kinase dst4, found in Dictyostelium discoideum (Social amoeba).